Consider the following 160-residue polypeptide: 6,7-dimethyl-8-ribityllumazine synthase (160 aa).

5-amino-6-(D-ribitylamino)uracil contacts are provided by residues Trp27, 59–61 (AIE), and 81–83 (VVI). 86-87 (DT) provides a ligand contact to (2S)-2-hydroxy-3-oxobutyl phosphate. His89 (proton donor) is an active-site residue. Asn114 is a binding site for 5-amino-6-(D-ribitylamino)uracil. Arg128 contributes to the (2S)-2-hydroxy-3-oxobutyl phosphate binding site.

Belongs to the DMRL synthase family. In terms of assembly, homopentamer.

The catalysed reaction is (2S)-2-hydroxy-3-oxobutyl phosphate + 5-amino-6-(D-ribitylamino)uracil = 6,7-dimethyl-8-(1-D-ribityl)lumazine + phosphate + 2 H2O + H(+). It participates in cofactor biosynthesis; riboflavin biosynthesis; riboflavin from 2-hydroxy-3-oxobutyl phosphate and 5-amino-6-(D-ribitylamino)uracil: step 1/2. In terms of biological role, catalyzes the formation of 6,7-dimethyl-8-ribityllumazine by condensation of 5-amino-6-(D-ribitylamino)uracil with 3,4-dihydroxy-2-butanone 4-phosphate. This is the penultimate step in the biosynthesis of riboflavin. This chain is 6,7-dimethyl-8-ribityllumazine synthase, found in Mycobacterium leprae (strain Br4923).